Reading from the N-terminus, the 398-residue chain is Phosphoglycerate kinase (398 aa).

Substrate-binding positions include 21–23 (DFN), Arg-36, 59–62 (HFGR), Arg-117, and Arg-150. Residues Lys-200, Glu-321, and 351–354 (GGDS) each bind ATP.

Belongs to the phosphoglycerate kinase family. Monomer.

It localises to the cytoplasm. The catalysed reaction is (2R)-3-phosphoglycerate + ATP = (2R)-3-phospho-glyceroyl phosphate + ADP. Its pathway is carbohydrate degradation; glycolysis; pyruvate from D-glyceraldehyde 3-phosphate: step 2/5. The polypeptide is Phosphoglycerate kinase (Wolbachia sp. subsp. Drosophila simulans (strain wRi)).